The following is a 171-amino-acid chain: Macro domain-containing protein RSc0334 (171 aa).

In terms of domain architecture, Macro spans 1–171 (MPIPTVTLRA…LYETALNEAR (171 aa)).

It belongs to the MacroD-type family.

The chain is Macro domain-containing protein RSc0334 from Ralstonia nicotianae (strain ATCC BAA-1114 / GMI1000) (Ralstonia solanacearum).